The following is a 1097-amino-acid chain: uncharacterized protein (1097 aa).

The stretch at 31–1087 (LLNVARQEEE…TALNKLRTRH (1057 aa)) forms a coiled coil.

This sequence belongs to the TRAFAC class myosin-kinesin ATPase superfamily. Myosin family. In terms of tissue distribution, specifically expressed in muscles of the head including temporalis and tensor veli palatini.

Functionally, has most probably lost the function in masticatory muscles contraction suspected for its homologs in dog (AC F1PT61) and apes. This is an uncharacterized protein from Homo sapiens (Human).